The chain runs to 764 residues: 1,4-alpha-glucan branching enzyme GlgB (764 aa).

The tract at residues 1-46 is disordered; sequence MSAARQPSPTVRDKAAPEPAAPAAPKGARAPRARRAAPPHGVRPAP. Over residues 17–28 the composition is skewed to low complexity; the sequence is PEPAAPAAPKGA. Asp440 (nucleophile) is an active-site residue. Residue Glu493 is the Proton donor of the active site.

Belongs to the glycosyl hydrolase 13 family. GlgB subfamily. Monomer.

The catalysed reaction is Transfers a segment of a (1-&gt;4)-alpha-D-glucan chain to a primary hydroxy group in a similar glucan chain.. The protein operates within glycan biosynthesis; glycogen biosynthesis. Functionally, catalyzes the formation of the alpha-1,6-glucosidic linkages in glycogen by scission of a 1,4-alpha-linked oligosaccharide from growing alpha-1,4-glucan chains and the subsequent attachment of the oligosaccharide to the alpha-1,6 position. The protein is 1,4-alpha-glucan branching enzyme GlgB (glgB) of Kitasatospora aureofaciens (Streptomyces aureofaciens).